A 1412-amino-acid polypeptide reads, in one-letter code: MEAVQAAAAATSSGGSSGSVPGSGSGSASKLIKTEPIDFEMLHLEENERQQDIEREPSSSNSNSNSNSLTPQRYTHVQVQTVPPRQPTGLTTPGGTQKVILTPRVEYVQQRATSSTGGGMKHVYSQQQGTAASRSAPPETTALLTTTSGTPQIIITRTLPSNQHLSRRHSASPSALHHYQQQQPQRQQSPPPLHHQQQQQQQHVRVIRDGRLYDEATVVVAARRHSVSPPPLHHHSRSAPVSPVIARRGGAAAYMDQQYQQRQTPPLAPPPPPPPPPPPPPPPQQQQQQYISTGVPPPTAAARKFVVSTSTRHVNVIASNHFQQQQQQHQAQQHQQQHQQHQQHQQHVIASVSSSSSSSAIGSGGSSSSHIFRTPVVSSSSSSNMHHQQQQQQQQSSLGNSVMRPPPPPPPPKVKHASSSSSGNSSSSNTNNSSSSSNGEEPSSSIPDLEFDGTTVLCRVCGDKASGFHYGVHSCEGCKGFFRRSIQQKIQYRPCTKNQQCSILRINRNRCQYCRLKKCIAVGMSRDAVRFGRVPKREKARILAAMQQSTQNRGQQRALATELDDQPRLLAAVLRAHLETCEFTKEKVSAMRQRARDCPSYSMPTLLACPLNPAPELQSEQEFSQRFAHVIRGVIDFAGMIPGFQLLTQDDKFTLLKAGLFDALFVRLICMFDSSINSIICLNGQVMRRDAIQNGANARFLVDSTFNFAERMNSMNLTDAEIGLFCAIVLITPDRPGLRNLELIEKMYSRLKGCLQYIVAQNRPDQPEFLAKLLETMPDLRTLSTLHTEKLVVFRTEHKELLRQQMWSMEDGNNSDGQQNKSPSGSWADAMDVEAAKSPLGSVSSTESADLDYGSPSSSQPQGVSLPSPPQQQPSALASSAPLLAATLSGGCPLRNRANSGSSGDSGAAEMDIVGSHAHLTQNGLTITPIVRHQQQQQQQQQIGILNNAHSRNLNGGHAMCQQQQQHPQLHHHLTAGAARYRKLDSPTDSGIESGNEKNECKAVSSGGSSSCSSPRSSVDDALDCSDAAANHNQVVQHPQLSVVSVSPVRSPQPSTSSHLKRQIVEDMPVLKRVLQAPPLYDTNSLMDEAYKPHKKFRALRHREFETAEADASSSTSGSNSLSAGSPRQSPVPNSVATPPPSAASAAAGNPAQSQLHMHLTRSSPKASMASSHSVLAKSLMAEPRMTPEQMKRSDIIQNYLKRENSTAASSTTNGVGNRSPSSSSTPPPSAVQNQQRWGSSSVITTTCQQRQQSVSPHSNGSSSSSSSSSSSSSSSSSTSSNCSSSSASSCQYFQSPHSTSNGTSAPASSSSGSNSATPLLELQVDIADSAQPLNLSKKSPTPPPSKLHALVAAANAVQRYPTLSADVTVTASNGGPPSAAASPAPSSSPPASVGSPNPGLSAAVHKVMLEA.

The segment covering 1–14 (MEAVQAAAAATSSG) has biased composition (low complexity). Disordered stretches follow at residues 1–96 (MEAV…PGGT), 110–204 (QRAT…QQHV), 258–298 (QYQQ…VPPP), and 321–448 (HFQQ…SIPD). The segment covering 15-25 (GSSGSVPGSGS) has biased composition (gly residues). Residues 32–57 (IKTEPIDFEMLHLEENERQQDIEREP) are compositionally biased toward basic and acidic residues. Low complexity predominate over residues 58 to 68 (SSSNSNSNSNS). The segment covering 69–81 (LTPQRYTHVQVQT) has biased composition (polar residues). Over residues 87-96 (PTGLTTPGGT) the composition is skewed to low complexity. The span at 124–133 (YSQQQGTAAS) shows a compositional bias: polar residues. Positions 135–150 (SAPPETTALLTTTSGT) are enriched in low complexity. Positions 151–164 (PQIIITRTLPSNQH) are enriched in polar residues. Positions 177-203 (HHYQQQQPQRQQSPPPLHHQQQQQQQH) are enriched in low complexity. A compositionally biased stretch (pro residues) spans 266–284 (PLAPPPPPPPPPPPPPPPQ). 3 stretches are compositionally biased toward low complexity: residues 323 to 371 (QQQQ…SSHI), 378 to 403 (SSSS…NSVM), and 417 to 447 (ASSS…SSIP). Positions 455-531 (TVLCRVCGDK…VGMSRDAVRF (77 aa)) form a DNA-binding region, nuclear receptor. NR C4-type zinc fingers lie at residues 458–478 (CRVC…CEGC) and 495–514 (CTKN…CQYC). The 249-residue stretch at 565-813 (DQPRLLAAVL…QQMWSMEDGN (249 aa)) folds into the NR LBD domain. 6 disordered regions span residues 837 to 878 (KSPL…SALA), 984 to 1021 (LDSP…SVDD), 1044 to 1064 (VSVS…KRQI), 1108 to 1174 (AEAD…SSHS), 1204 to 1317 (ENST…SNSA), and 1368 to 1401 (VTVT…NPGL). Composition is skewed to low complexity over residues 854-866 (GSPS…GVSL), 1005-1017 (SSGG…SPRS), 1044-1058 (VSVS…STSS), 1110-1155 (ADAS…AQSQ), and 1163-1174 (SSPKASMASSHS). 2 stretches are compositionally biased toward polar residues: residues 1206 to 1219 (STAA…VGNR) and 1231 to 1253 (AVQN…QRQQ). Low complexity-rich tracts occupy residues 1254 to 1290 (SVSP…SASS), 1299 to 1317 (STSN…SNSA), and 1372 to 1400 (ASNG…PNPG).

It belongs to the nuclear hormone receptor family. NR1 subfamily.

It is found in the nucleus. Its function is as follows. Implicated in the regulation of ecdysone-triggered gene hierarchies. Probably plays a key role in mediating the regulation of the larval molt by 20-OH-ecdysone. This Drosophila melanogaster (Fruit fly) protein is Ecdysone-induced protein 75B, isoform B (Eip75B).